The primary structure comprises 463 residues: Fumarate hydratase class II (463 aa).

Substrate-binding positions include 98-100, 129-132, 139-141, and Thr-187; these read SGT, HPND, and SSN. His-188 acts as the Proton donor/acceptor in catalysis. Ser-318 is a catalytic residue. Residues Ser-319 and 324–326 each bind substrate; that span reads KVN.

The protein belongs to the class-II fumarase/aspartase family. Fumarase subfamily. In terms of assembly, homotetramer.

The protein localises to the cytoplasm. It carries out the reaction (S)-malate = fumarate + H2O. The protein operates within carbohydrate metabolism; tricarboxylic acid cycle; (S)-malate from fumarate: step 1/1. Functionally, involved in the TCA cycle. Catalyzes the stereospecific interconversion of fumarate to L-malate. This chain is Fumarate hydratase class II, found in Rickettsia bellii (strain RML369-C).